The sequence spans 810 residues: Phenylalanine--tRNA ligase beta subunit (810 aa).

Residues 39 to 154 (APPTEKIVVG…EGTPVGQDIR (116 aa)) enclose the tRNA-binding domain. Residues 405-480 (PQRAPVSMRA…RIYGFEKIPA (76 aa)) enclose the B5 domain. Mg(2+) is bound by residues Asp458, Asp464, Glu467, and Glu468. Residues 707–809 (SKFPPVRRDI…MARVYGARLR (103 aa)) form the FDX-ACB domain.

Belongs to the phenylalanyl-tRNA synthetase beta subunit family. Type 1 subfamily. Tetramer of two alpha and two beta subunits. The cofactor is Mg(2+).

The protein localises to the cytoplasm. It catalyses the reaction tRNA(Phe) + L-phenylalanine + ATP = L-phenylalanyl-tRNA(Phe) + AMP + diphosphate + H(+). This Burkholderia pseudomallei (strain 1710b) protein is Phenylalanine--tRNA ligase beta subunit.